The sequence spans 1494 residues: ABC multidrug transporter atrG (1494 aa).

Over residues 1–11 the composition is skewed to polar residues; sequence MSLLGTINPNL. Disordered stretches follow at residues 1 to 48 and 84 to 105; these read MSLL…RTSD and FSVS…TLNP. A glycan (N-linked (GlcNAc...) asparagine) is linked at Asn41. 2 N-linked (GlcNAc...) asparagine glycosylation sites follow: Asn141 and Asn340. Residues 162 to 416 form the ABC transporter 1 domain; that stretch reads LQVGALFRAV…FTTMGFECPE (255 aa). The next 2 membrane-spanning stretches (helical) occupy residues 527-547 and 561-581; these read LTMS…SVFY and ALLF…ILTL. N-linked (GlcNAc...) asparagine glycosylation is present at Asn622. A run of 3 helical transmembrane segments spans residues 636–656, 669–689, and 778–798; these read GPFF…SMLF, ALVP…FTIP, and GIMF…TEYI. Asn835 carries N-linked (GlcNAc...) asparagine glycosylation. An ABC transporter 2 domain is found at 852–1095; that stretch reads FHWQDVCYDI…LASYFERNGA (244 aa). Residue 888–895 coordinates ATP; sequence GVSGAGKT. The next 5 membrane-spanning stretches (helical) occupy residues 1191 to 1211, 1227 to 1247, 1276 to 1296, 1312 to 1332, and 1351 to 1371; these read YIYS…FSFF, IFML…NFVT, LPWN…PIGL, LMWL…HMMI, and LCLI…FWIF. Asn1410 and Asn1432 each carry an N-linked (GlcNAc...) asparagine glycan. A helical membrane pass occupies residues 1463–1483; that stretch reads FGIMWAFIVFNIAAAVFIYWL.

The protein belongs to the ABC transporter superfamily. ABCG family. PDR (TC 3.A.1.205) subfamily.

The protein resides in the cell membrane. It catalyses the reaction (R)-miconazole(in) + ATP + H2O = (R)-miconazole(out) + ADP + phosphate + H(+). Pleiotropic ABC efflux transporter involved in the basal level of azole susceptibility. Confers resistance to miconazole and clotrimazole. The chain is ABC multidrug transporter atrG from Aspergillus oryzae (strain ATCC 42149 / RIB 40) (Yellow koji mold).